The sequence spans 238 residues: 7-carboxy-7-deazaguanine synthase (238 aa).

Residues 14-16 (IQG) and R29 each bind substrate. The Radical SAM core domain maps to 20–234 (VVGQKTMFIR…PQLHALVWGN (215 aa)). [4Fe-4S] cluster-binding residues include C33, C37, and C40. Residue S42 coordinates Mg(2+). Position 80 (S80) interacts with substrate. S-adenosyl-L-methionine-binding positions include G82 and 126–128 (SPK).

The protein belongs to the radical SAM superfamily. 7-carboxy-7-deazaguanine synthase family. As to quaternary structure, homodimer. [4Fe-4S] cluster serves as cofactor. The cofactor is S-adenosyl-L-methionine. Mg(2+) is required as a cofactor.

It catalyses the reaction 6-carboxy-5,6,7,8-tetrahydropterin + H(+) = 7-carboxy-7-deazaguanine + NH4(+). It functions in the pathway purine metabolism; 7-cyano-7-deazaguanine biosynthesis. Its function is as follows. Catalyzes the complex heterocyclic radical-mediated conversion of 6-carboxy-5,6,7,8-tetrahydropterin (CPH4) to 7-carboxy-7-deazaguanine (CDG), a step common to the biosynthetic pathways of all 7-deazapurine-containing compounds. In Bacillus cereus (strain ATCC 14579 / DSM 31 / CCUG 7414 / JCM 2152 / NBRC 15305 / NCIMB 9373 / NCTC 2599 / NRRL B-3711), this protein is 7-carboxy-7-deazaguanine synthase.